The primary structure comprises 378 residues: Mannitol-1-phosphate 5-dehydrogenase (378 aa).

Position 4–15 (Ser-4–Gly-15) interacts with NAD(+).

The protein belongs to the mannitol dehydrogenase family.

It catalyses the reaction D-mannitol 1-phosphate + NAD(+) = beta-D-fructose 6-phosphate + NADH + H(+). This Streptococcus pneumoniae (strain 70585) protein is Mannitol-1-phosphate 5-dehydrogenase.